Consider the following 339-residue polypeptide: Large ribosomal subunit protein uL10 (339 aa).

A disordered region spans residues 305-339; that stretch reads TQPQQEEKVEEAEEEEEEEEASEEDALAGLGALFG. The span at 312–330 shows a compositional bias: acidic residues; sequence KVEEAEEEEEEEEASEEDA.

This sequence belongs to the universal ribosomal protein uL10 family. In terms of assembly, part of the 50S ribosomal subunit. Forms part of the ribosomal stalk which helps the ribosome interact with GTP-bound translation factors. Forms a heptameric L10(L12)2(L12)2(L12)2 complex, where L10 forms an elongated spine to which the L12 dimers bind in a sequential fashion.

Functionally, forms part of the ribosomal stalk, playing a central role in the interaction of the ribosome with GTP-bound translation factors. The polypeptide is Large ribosomal subunit protein uL10 (Thermococcus onnurineus (strain NA1)).